Reading from the N-terminus, the 179-residue chain is GTP-dependent dephospho-CoA kinase (179 aa).

GTP-binding residues include D55, V57, D74, K76, and E128.

Belongs to the GTP-dependent DPCK family.

It carries out the reaction 3'-dephospho-CoA + GTP = GDP + CoA + H(+). It functions in the pathway cofactor biosynthesis; coenzyme A biosynthesis. Catalyzes the GTP-dependent phosphorylation of the 3'-hydroxyl group of dephosphocoenzyme A to form coenzyme A (CoA). The chain is GTP-dependent dephospho-CoA kinase from Saccharolobus solfataricus (strain ATCC 35092 / DSM 1617 / JCM 11322 / P2) (Sulfolobus solfataricus).